Here is a 298-residue protein sequence, read N- to C-terminus: 3-hydroxyisobutyrate dehydrogenase (298 aa).

NAD(+)-binding positions include 2–30 (TDIAFLGLGNMGGPMAANLLKAGHRVNVF), 65–66 (LP), and threonine 96. The active site involves lysine 171. Position 246 (lysine 246) interacts with NAD(+).

Belongs to the HIBADH-related family.

The catalysed reaction is 3-hydroxy-2-methylpropanoate + NAD(+) = 2-methyl-3-oxopropanoate + NADH + H(+). It participates in amino-acid degradation; L-valine degradation. The protein is 3-hydroxyisobutyrate dehydrogenase of Pseudomonas aeruginosa (strain ATCC 15692 / DSM 22644 / CIP 104116 / JCM 14847 / LMG 12228 / 1C / PRS 101 / PAO1).